Reading from the N-terminus, the 207-residue chain is Acyl-homoserine-lactone synthase (207 aa).

It belongs to the autoinducer synthase family.

The catalysed reaction is a fatty acyl-[ACP] + S-adenosyl-L-methionine = an N-acyl-L-homoserine lactone + S-methyl-5'-thioadenosine + holo-[ACP] + H(+). Its function is as follows. Required for the synthesis of N-butanoyl-L-homoserine lactone (BHL), an autoinducer molecule which binds to AhyR. This Aeromonas hydrophila protein is Acyl-homoserine-lactone synthase (ahyI).